Reading from the N-terminus, the 229-residue chain is Aldehyde oxidoreductase iron-sulfur-binding subunit PaoA (229 aa).

Positions 1–21 (MSNQGEYPEDNRVGKHEPHDL) are disordered. A signal peptide (tat-type signal) is located at residues 1–53 (MSNQGEYPEDNRVGKHEPHDLSLTRRDLIKVSAATAAAAVVYPHSTLAASVPA). Positions 9-21 (EDNRVGKHEPHDL) are enriched in basic and acidic residues. Positions 61–137 (MPLTLKVNGK…GAEITTIEGL (77 aa)) constitute a 2Fe-2S ferredoxin-type domain. Positions 99, 104, 105, 107, 119, 158, 161, 208, and 210 each coordinate [2Fe-2S] cluster.

Heterotrimer composed of PaoA, PaoB and PaoC. It depends on [2Fe-2S] cluster as a cofactor. In terms of processing, exported by the Tat system. The position of the signal peptide cleavage has not been experimentally proven.

It localises to the periplasm. The enzyme catalyses an aldehyde + A + H2O = a carboxylate + AH2 + H(+). Oxidizes aldehydes to the corresponding carboxylic acids with a preference for aromatic aldehydes. It might play a role in the detoxification of aldehydes to avoid cell damage. The chain is Aldehyde oxidoreductase iron-sulfur-binding subunit PaoA from Escherichia coli O157:H7.